The chain runs to 106 residues: UPF0145 protein PFL_3418 (106 aa).

Belongs to the UPF0145 family.

The sequence is that of UPF0145 protein PFL_3418 from Pseudomonas fluorescens (strain ATCC BAA-477 / NRRL B-23932 / Pf-5).